Here is a 637-residue protein sequence, read N- to C-terminus: Dihydrolipoyllysine-residue acetyltransferase component of pyruvate dehydrogenase complex, mitochondrial (637 aa).

A mitochondrion-targeting transit peptide spans 1-85 (MWRVCVRRAQ…LLGSPGRRSY (85 aa)). A disordered region spans residues 80-100 (PGRRSYSLPPHQKVPLPSLSP). The region spanning 90-166 (HQKVPLPSLS…PIGSIICITV (77 aa)) is the Lipoyl-binding 1 domain. The residue at position 99 (serine 99) is a Phosphoserine. Lysine 131 is modified (N6-lipoyllysine). Disordered regions lie at residues 189–219 (QAAA…PPHM) and 307–340 (LKPQ…PAGP). Residues 201-211 (AAPTAPSAKAP) show a composition bias toward low complexity. The Lipoyl-binding 2 domain maps to 218–287 (HMQVSAVGEQ…PLGAPLCIIV (70 aa)). The span at 310–321 (QAPPPVPPPVAA) shows a compositional bias: pro residues. Residues 322-333 (APPTAQPLAPTP) are compositionally biased toward low complexity. One can recognise a Peripheral subunit-binding (PSBD) domain in the interval 345 to 382 (FVSPLAKKLAAERGIDLTQVKGTGPEGRIIKKDIDSFV). Arginine 451 contacts CoA. Lysine 456 carries the N6-acetyllysine modification. An N6-succinyllysine modification is found at lysine 463. Serine 465 is a CoA binding site. Lysine 537 is modified (N6-succinyllysine). 3 residues coordinate CoA: serine 556, asparagine 557, and glycine 581. Residues histidine 610 and aspartate 614 contribute to the active site.

This sequence belongs to the 2-oxoacid dehydrogenase family. Part of the pyruvate dehydrogenase complex (PDHc) that is a multi-enzyme complex composed of multiple copies of three enzymes, pyruvate dehydrogenase (subunits PDH1A and PDHB, E1 component), dihydrolipoamide acetyltransferase (DLAT, E2 component), and dihydrolipoamide dehydrogenase (DLD, E3 component) to which is added an additional protein the E3-binding protein (PDHX, E3BP). In terms of structural architecture, the E2 and E3BP components assemble into a 60meric central core with icosahedral symmetry. The central core is decorated with E1 and E3 proteins. Currently, two alternative models for the E2:E3BP stoichiometry are considered as being either 48:12 (E2(48)-E3BP(12)) or 40:20 (E2(40)-E3BP(20)). Interacts with PDK2 and PDK3. Interacts with SIRT4. Interacts with PDHB. It depends on (R)-lipoate as a cofactor. Post-translationally, delipoylated at Lys-131 by SIRT4, delipoylation decreases the PHD complex activity. In terms of tissue distribution, detected at higher levels in cauda epididymal spermatazoa than in caput epididymal spermatazoa (at protein level).

It is found in the mitochondrion matrix. The catalysed reaction is N(6)-[(R)-dihydrolipoyl]-L-lysyl-[protein] + acetyl-CoA = N(6)-[(R)-S(8)-acetyldihydrolipoyl]-L-lysyl-[protein] + CoA. In terms of biological role, as part of the pyruvate dehydrogenase complex, catalyzes the transfers of an acetyl group to a lipoic acid moiety. The pyruvate dehydrogenase complex, catalyzes the overall conversion of pyruvate to acetyl-CoA and CO(2), and thereby links cytoplasmic glycolysis and the mitochondrial tricarboxylic acid (TCA) cycle. This chain is Dihydrolipoyllysine-residue acetyltransferase component of pyruvate dehydrogenase complex, mitochondrial, found in Mesocricetus auratus (Golden hamster).